Consider the following 361-residue polypeptide: Holliday junction branch migration complex subunit RuvB (361 aa).

Acidic residues predominate over residues 1–12 (MNWDETGPETDE). A disordered region spans residues 1–21 (MNWDETGPETDEPTGPVLDDR). Residues 13–199 (PTGPVLDDRL…FGFTGHMEFY (187 aa)) are large ATPase domain (RuvB-L). ATP-binding positions include Leu-38, Arg-39, Gly-80, Lys-83, Thr-84, Thr-85, 146-148 (EDF), Arg-189, Tyr-199, and Arg-236. Position 84 (Thr-84) interacts with Mg(2+). Positions 200 to 270 (APAELERVLH…IAMAALKVYE (71 aa)) are small ATPAse domain (RuvB-S). Residues 273–361 (ARGLDRLDRA…AKGQQGLFGA (89 aa)) form a head domain (RuvB-H) region. Residues Arg-309, Arg-328, and Arg-333 each contribute to the DNA site.

The protein belongs to the RuvB family. Homohexamer. Forms an RuvA(8)-RuvB(12)-Holliday junction (HJ) complex. HJ DNA is sandwiched between 2 RuvA tetramers; dsDNA enters through RuvA and exits via RuvB. An RuvB hexamer assembles on each DNA strand where it exits the tetramer. Each RuvB hexamer is contacted by two RuvA subunits (via domain III) on 2 adjacent RuvB subunits; this complex drives branch migration. In the full resolvosome a probable DNA-RuvA(4)-RuvB(12)-RuvC(2) complex forms which resolves the HJ.

It localises to the cytoplasm. The enzyme catalyses ATP + H2O = ADP + phosphate + H(+). Functionally, the RuvA-RuvB-RuvC complex processes Holliday junction (HJ) DNA during genetic recombination and DNA repair, while the RuvA-RuvB complex plays an important role in the rescue of blocked DNA replication forks via replication fork reversal (RFR). RuvA specifically binds to HJ cruciform DNA, conferring on it an open structure. The RuvB hexamer acts as an ATP-dependent pump, pulling dsDNA into and through the RuvAB complex. RuvB forms 2 homohexamers on either side of HJ DNA bound by 1 or 2 RuvA tetramers; 4 subunits per hexamer contact DNA at a time. Coordinated motions by a converter formed by DNA-disengaged RuvB subunits stimulates ATP hydrolysis and nucleotide exchange. Immobilization of the converter enables RuvB to convert the ATP-contained energy into a lever motion, pulling 2 nucleotides of DNA out of the RuvA tetramer per ATP hydrolyzed, thus driving DNA branch migration. The RuvB motors rotate together with the DNA substrate, which together with the progressing nucleotide cycle form the mechanistic basis for DNA recombination by continuous HJ branch migration. Branch migration allows RuvC to scan DNA until it finds its consensus sequence, where it cleaves and resolves cruciform DNA. In Streptomyces griseus subsp. griseus (strain JCM 4626 / CBS 651.72 / NBRC 13350 / KCC S-0626 / ISP 5235), this protein is Holliday junction branch migration complex subunit RuvB.